Here is a 516-residue protein sequence, read N- to C-terminus: Cytochrome P450 monooxygenase asR2 (516 aa).

A helical membrane pass occupies residues 9 to 29 (LNSITFSLLVFLGFVGVSQLI). N-linked (GlcNAc...) asparagine glycosylation is found at asparagine 248 and asparagine 273. Cysteine 461 contributes to the heme binding site.

Belongs to the cytochrome P450 family. The cofactor is heme.

It is found in the membrane. The protein operates within secondary metabolite biosynthesis; terpenoid biosynthesis. Functionally, cytochrome P450 monooxygenase; part of the gene cluster that mediates the biosynthesis of xenovulene A, an unusual meroterpenoid that has potent inhibitory effects on the human gamma-aminobutyrate A (GABAA) benzodiazepine receptor. The first step of xenovulene A biosynthesis is the biosynthesis of 3-methylorcinaldehyde performed by the non-reducing polyketide synthase aspks1. The salicylate hydroxylase asL1 then catalyzes the oxidative dearomatization of 3-methylorcinaldehyde to yield a dearomatized hydroxycyclohexadione. The 2-oxoglutarate-dependent dioxygenase asL3 further catalyzes the oxidative ring expansion to provide the first tropolone metabolite. The cytochrome P450 monooxygenase asR2 allows the synthesis of tropolone hemiacetal. In parallel, a previously unrecognised class of terpene cyclase, asR6, produces alpha-humulene from farnesylpyrophosphate (FPP). The putative Diels-Alderase asR5 probably catalyzes the formation of the tropolone-humulene skeleton by linking humulene and the polyketide moiety. Oxidative-ring contractions catalyzed by asL4 and asL6 then processively remove carbon atoms from the polyketide to yield xenovulene A. The polypeptide is Cytochrome P450 monooxygenase asR2 (Sarocladium schorii (Acremonium strictum (strain IMI 501407))).